We begin with the raw amino-acid sequence, 66 residues long: UPF0370 protein YpfN (66 aa).

The helical transmembrane segment at 4–24 (LAKYWWILVLVFLVGVLLNVI) threads the bilayer. A disordered region spans residues 39-66 (KPELPPHRDFNDKWDDEDGWPKKDQPKK). A compositionally biased stretch (basic and acidic residues) spans 42 to 66 (LPPHRDFNDKWDDEDGWPKKDQPKK).

It belongs to the UPF0370 family.

The protein localises to the cell membrane. The chain is UPF0370 protein YpfN from Salmonella paratyphi B (strain ATCC BAA-1250 / SPB7).